The following is a 379-amino-acid chain: Dual-specificity RNA methyltransferase RlmN (379 aa).

Catalysis depends on glutamate 95, which acts as the Proton acceptor. The Radical SAM core domain occupies glutamate 101–aspartate 345. Cysteine 108 and cysteine 350 form a disulfide bridge. Cysteine 115, cysteine 119, and cysteine 122 together coordinate [4Fe-4S] cluster. S-adenosyl-L-methionine is bound by residues glycine 176–glutamate 177, serine 208, serine 230–histidine 232, and asparagine 307. Cysteine 350 (S-methylcysteine intermediate) is an active-site residue.

It belongs to the radical SAM superfamily. RlmN family. The cofactor is [4Fe-4S] cluster.

The protein localises to the cytoplasm. The enzyme catalyses adenosine(2503) in 23S rRNA + 2 reduced [2Fe-2S]-[ferredoxin] + 2 S-adenosyl-L-methionine = 2-methyladenosine(2503) in 23S rRNA + 5'-deoxyadenosine + L-methionine + 2 oxidized [2Fe-2S]-[ferredoxin] + S-adenosyl-L-homocysteine. The catalysed reaction is adenosine(37) in tRNA + 2 reduced [2Fe-2S]-[ferredoxin] + 2 S-adenosyl-L-methionine = 2-methyladenosine(37) in tRNA + 5'-deoxyadenosine + L-methionine + 2 oxidized [2Fe-2S]-[ferredoxin] + S-adenosyl-L-homocysteine. In terms of biological role, specifically methylates position 2 of adenine 2503 in 23S rRNA and position 2 of adenine 37 in tRNAs. m2A2503 modification seems to play a crucial role in the proofreading step occurring at the peptidyl transferase center and thus would serve to optimize ribosomal fidelity. This is Dual-specificity RNA methyltransferase RlmN from Burkholderia cenocepacia (strain ATCC BAA-245 / DSM 16553 / LMG 16656 / NCTC 13227 / J2315 / CF5610) (Burkholderia cepacia (strain J2315)).